The following is a 47-amino-acid chain: Large ribosomal subunit protein bL34 (47 aa).

It belongs to the bacterial ribosomal protein bL34 family.

The polypeptide is Large ribosomal subunit protein bL34 (Mycobacterium tuberculosis (strain ATCC 25177 / H37Ra)).